Reading from the N-terminus, the 596-residue chain is Nuclear receptor subfamily 2 group C member 2 (596 aa).

Serine 19 is modified (phosphoserine; by MAPK). Phosphoserine is present on serine 46. Phosphoserine; by MAPK occurs at positions 55 and 68. The residue at position 98 (serine 98) is a Phosphoserine. The nuclear receptor DNA-binding region spans 114 to 189; it reads VEYCVVCGDK…MGMKMESVQS (76 aa). 2 consecutive NR C4-type zinc fingers follow at residues 117–137 and 153–177; these read CVVC…CEGC and CRSN…LKKC. Lysine 192 is covalently cross-linked (Glycyl lysine isopeptide (Lys-Gly) (interchain with G-Cter in SUMO2)). Serine 219 bears the Phosphoserine mark. Lysine 231 carries the N6-acetyllysine modification. The NR LBD domain maps to 341–583; that stretch reads GSIHVISRDQ…SIIPYILKME (243 aa).

This sequence belongs to the nuclear hormone receptor family. NR2 subfamily. In terms of assembly, homodimer; can bind DNA as homodimer. Heterodimer; binds DNA as a heterodimer with NR2C1 required for chromatin remodeling and for binding to promoter regions such as globin DR1 repeats. Interacts with PCAF; the interaction preferentially occurs on the non-phosphorylated form and induces NR2C2-mediated transactivation activity and does not require the ligand-binding domain. Interacts (MAPK-mediated phosphorylated form) with NRIP1; the interaction promotes repression of NR2C2-mediated activity. Interacts with NR2C2AP; the interaction represses selective NR2C2-mediated transcriptional activity. Interacts with NLRP10. Interacts (via ligand-binding region) with transcriptional corepressor JAZF1; the interaction promotes NR2C2-mediated transcriptional repression. Phosphorylation on Ser-19 and Ser-68 is an important regulator of NR2C2-mediated transcriptional activity. Phosphorylation on these residues recruits the corepressor, NRIP1, leading to transcripional repression, whereas the non-phosphorylated form preferentially recruits the coactivator, PCAF.

It localises to the nucleus. Functionally, orphan nuclear receptor that can act as a repressor or activator of transcription. An important repressor of nuclear receptor signaling pathways such as retinoic acid receptor, retinoid X, vitamin D3 receptor, thyroid hormone receptor and estrogen receptor pathways. May regulate gene expression during the late phase of spermatogenesis. Together with NR2C1, forms the core of the DRED (direct repeat erythroid-definitive) complex that represses embryonic and fetal globin transcription including that of GATA1. Binds to hormone response elements (HREs) consisting of two 5'-AGGTCA-3' half site direct repeat consensus sequences. Plays a fundamental role in early embryonic development and embryonic stem cells. Required for normal spermatogenesis and cerebellum development. Appears to be important for neurodevelopmentally regulated behavior. Activates transcriptional activity of LHCG. Antagonist of PPARA-mediated transactivation. This Homo sapiens (Human) protein is Nuclear receptor subfamily 2 group C member 2 (NR2C2).